A 765-amino-acid polypeptide reads, in one-letter code: Carboxysome assembly protein CsoS2 (765 aa).

A compositionally biased stretch (basic and acidic residues) spans 1 to 22 (MSTKTSREIALERRKAMSDGGK). Disordered stretches follow at residues 1–107 (MSTK…RTDV) and 165–229 (REAQ…NKNG). An N-terminal domain region spans residues 1–215 (MSTKTSREIA…RSKTGSTSKQ (215 aa)). Residues 7-22 (REIALERRKAMSDGGK) form an N-repeat 1 repeat. Polar residues predominate over residues 38–63 (SQDINSTGATSSNKKVLTSPSKSNIP). A compositionally biased stretch (basic and acidic residues) spans 77-87 (SSKELGIERRK). N-repeat repeat units lie at residues 79 to 94 (KELG…THGK), 158 to 173 (RDIV…KHGK), and 196 to 211 (REIS…KTGS). A compositionally biased stretch (basic and acidic residues) spans 187-207 (RRGDPDLSSREISQRVRELRS). Residues 216–586 (GNGKCRPCGP…LSNCETPPND (371 aa)) are middle region. M-repeat repeat units follow at residues 240-289 (KVGK…GQFC), 300-349 (RASV…KKYC), 358-397 (KVMQ…GDQY), 411-460 (KVGS…EKFC), 470-519 (KVGL…NDNC), and 530-580 (RATV…LSNC). Disordered regions lie at residues 306 to 328 (TTSG…GDEP) and 367 to 413 (GLKV…EKVG). The tract at residues 589–734 (YANQEKSASN…AMPPVDNKRN (146 aa)) is C-terminal domain. 2 C-repeat repeats span residues 604 to 648 (SVNS…GTEQ) and 677 to 711 (KKEP…EGVS). Disordered regions lie at residues 611–637 (EKYS…GPFD) and 656–765 (NMTY…GARG). The span at 730–741 (DNKRNDETEKPD) shows a compositional bias: basic and acidic residues. The C-terminal peptide stretch occupies residues 735 to 765 (DETEKPDFLITGSSGNTRDGQLVTFSGGARG).

The protein belongs to the CsoS2 family. In terms of assembly, probably interacts with the carboxysome major shell protein CsoS1 via the N-terminal domain. A CsoS1-CsoS1D-CsoS2 complex can be isolated following expression in E.coli. Interacts via its N-terminal repeats with RuBisCO. In terms of processing, unlike H.neapolitanus and predictions for P.marinus strain MIT 9313, this protein is not thought to have ribosomal frameshifting.

Its subcellular location is the carboxysome. In terms of biological role, required for alpha-carboxysome (Cb) assembly, mediates interaction between RuBisCO and the Cb shell. The protein is probably highly flexible. The C-terminal repeats act as the encapsulation signal to target proteins to the Cb; they are necessary and sufficient to target both CsoS2 and foreign proteins to the Cb. The N-terminal repeats of this protein bind simultaneously to both subunits of RuBisCO. Probably also interacts with the major shell proteins (CsoS1); that interaction would increase the local concentration of CsoS2 so that it can condense RuBisCO and full carboxysomes can be formed. There are estimated to be 163 CsoS2 proteins per carboxysome; unlike H.neapolitanus only 1 form is seen. This is Carboxysome assembly protein CsoS2 from Prochlorococcus marinus subsp. pastoris (strain CCMP1986 / NIES-2087 / MED4).